A 93-amino-acid polypeptide reads, in one-letter code: UPF0223 protein LACR_0546 (93 aa).

Belongs to the UPF0223 family.

This Lactococcus lactis subsp. cremoris (strain SK11) protein is UPF0223 protein LACR_0546.